The chain runs to 271 residues: Glutamate racemase (271 aa).

Substrate contacts are provided by residues 10–11 (DS) and 42–43 (YG). C73 functions as the Proton donor/acceptor in the catalytic mechanism. 74 to 75 (NT) serves as a coordination point for substrate. The active-site Proton donor/acceptor is the C183. 184-185 (TH) is a binding site for substrate.

Belongs to the aspartate/glutamate racemases family.

The enzyme catalyses L-glutamate = D-glutamate. Its pathway is cell wall biogenesis; peptidoglycan biosynthesis. Provides the (R)-glutamate required for cell wall biosynthesis. This Lactococcus lactis subsp. cremoris (strain MG1363) protein is Glutamate racemase.